A 539-amino-acid polypeptide reads, in one-letter code: GMP synthase [glutamine-hydrolyzing] (539 aa).

Positions 4-202 (KILILDFGSQ…VLQIAGAKPD (199 aa)) constitute a Glutamine amidotransferase type-1 domain. Cys-81 functions as the Nucleophile in the catalytic mechanism. Active-site residues include His-176 and Glu-178. In terms of domain architecture, GMPS ATP-PPase spans 203 to 395 (WIMKNHIEEA…LGLPPEMVYR (193 aa)). Position 230–236 (230–236 (SGGVDSS)) interacts with ATP.

In terms of assembly, homodimer.

The enzyme catalyses XMP + L-glutamine + ATP + H2O = GMP + L-glutamate + AMP + diphosphate + 2 H(+). It participates in purine metabolism; GMP biosynthesis; GMP from XMP (L-Gln route): step 1/1. Its function is as follows. Catalyzes the synthesis of GMP from XMP. The protein is GMP synthase [glutamine-hydrolyzing] of Burkholderia vietnamiensis (strain G4 / LMG 22486) (Burkholderia cepacia (strain R1808)).